Here is a 465-residue protein sequence, read N- to C-terminus: Cysteine--tRNA ligase (465 aa).

A Zn(2+)-binding site is contributed by cysteine 27. Positions 29–39 (PTVYDDAHLGH) match the 'HIGH' region motif. Zn(2+) contacts are provided by cysteine 207, histidine 237, and glutamate 241. Positions 269–273 (KMSKS) match the 'KMSKS' region motif. Lysine 272 provides a ligand contact to ATP.

This sequence belongs to the class-I aminoacyl-tRNA synthetase family. Monomer. The cofactor is Zn(2+).

The protein resides in the cytoplasm. It carries out the reaction tRNA(Cys) + L-cysteine + ATP = L-cysteinyl-tRNA(Cys) + AMP + diphosphate. The sequence is that of Cysteine--tRNA ligase from Nitratiruptor sp. (strain SB155-2).